A 78-amino-acid polypeptide reads, in one-letter code: Exodeoxyribonuclease 7 small subunit (78 aa).

The protein belongs to the XseB family. Heterooligomer composed of large and small subunits.

It is found in the cytoplasm. The enzyme catalyses Exonucleolytic cleavage in either 5'- to 3'- or 3'- to 5'-direction to yield nucleoside 5'-phosphates.. Functionally, bidirectionally degrades single-stranded DNA into large acid-insoluble oligonucleotides, which are then degraded further into small acid-soluble oligonucleotides. The chain is Exodeoxyribonuclease 7 small subunit from Paracoccus zeaxanthinifaciens.